The chain runs to 414 residues: CinA-like protein (414 aa).

It belongs to the CinA family.

The protein is CinA-like protein of Koribacter versatilis (strain Ellin345).